A 286-amino-acid chain; its full sequence is Small ribosomal subunit protein uS3 (286 aa).

The KH type-2 domain occupies 39–107 (VREYLKKKLA…PVHVNIEEIR (69 aa)). A disordered region spans residues 213–286 (QAGAGTAAPQ…KPGVNDAAAS (74 aa)). Residues 241–262 (GRADARSDGKAGEKKGPRKSDN) are compositionally biased toward basic and acidic residues.

This sequence belongs to the universal ribosomal protein uS3 family. As to quaternary structure, part of the 30S ribosomal subunit. Forms a tight complex with proteins S10 and S14.

Functionally, binds the lower part of the 30S subunit head. Binds mRNA in the 70S ribosome, positioning it for translation. This is Small ribosomal subunit protein uS3 from Nitrosospira multiformis (strain ATCC 25196 / NCIMB 11849 / C 71).